We begin with the raw amino-acid sequence, 236 residues long: Phosphoribosylaminoimidazole-succinocarboxamide synthase (236 aa).

It belongs to the SAICAR synthetase family.

The enzyme catalyses 5-amino-1-(5-phospho-D-ribosyl)imidazole-4-carboxylate + L-aspartate + ATP = (2S)-2-[5-amino-1-(5-phospho-beta-D-ribosyl)imidazole-4-carboxamido]succinate + ADP + phosphate + 2 H(+). The protein operates within purine metabolism; IMP biosynthesis via de novo pathway; 5-amino-1-(5-phospho-D-ribosyl)imidazole-4-carboxamide from 5-amino-1-(5-phospho-D-ribosyl)imidazole-4-carboxylate: step 1/2. The sequence is that of Phosphoribosylaminoimidazole-succinocarboxamide synthase from Pseudomonas syringae pv. syringae (strain B728a).